Reading from the N-terminus, the 340-residue chain is Uridine nucleosidase (340 aa).

His-254 is a catalytic residue.

Belongs to the IUNH family.

The protein resides in the cytoplasm. The protein localises to the nucleus. The enzyme catalyses uridine + H2O = D-ribose + uracil. In terms of biological role, also acts on cytidine. In Saccharomyces cerevisiae (strain ATCC 204508 / S288c) (Baker's yeast), this protein is Uridine nucleosidase (URH1).